We begin with the raw amino-acid sequence, 730 residues long: Kinesin-like protein KIF2C (730 aa).

Residues 1-256 (MERLVATRLV…MDCHRISMAD (256 aa)) are globular. Residues 79–98 (NMPPQRNVSSQNHKRKTISK) form a disordered region. The interval 211-242 (EQRAQNYERRMKRAQDYDTSVPNWEFGKMIKE) is negative regulator of microtubule-binding. A Kinesin motor domain is found at 262–592 (RICVCVRKRP…LRYADRVKEL (331 aa)). ATP is bound by residues Arg-268 and 352–359 (GQTGSGKT). Positions 599–730 (TNDDNLQMED…QISKKKRSNK (132 aa)) form a coiled coil.

It belongs to the TRAFAC class myosin-kinesin ATPase superfamily. Kinesin family. MCAK/KIF2 subfamily.

The protein resides in the cytoplasm. Its subcellular location is the cytoskeleton. It is found in the nucleus. It localises to the chromosome. The protein localises to the centromere. The protein resides in the kinetochore. Promotes ATP-dependent removal of tubulin dimers from microtubules. Regulates the turnover of microtubules at the kinetochore and functions in chromosome segregation during mitosis. May play a role in chromosome congression and may be required for the lateral to end-on conversion of the chromosome-microtubule attachment. The sequence is that of Kinesin-like protein KIF2C (kif2c) from Xenopus laevis (African clawed frog).